Here is a 134-residue protein sequence, read N- to C-terminus: uncharacterized protein (134 aa).

This is an uncharacterized protein from Synechococcus elongatus (strain ATCC 33912 / PCC 7942 / FACHB-805) (Anacystis nidulans R2).